We begin with the raw amino-acid sequence, 222 residues long: Pleckstrin homology domain-containing family B member 2 (222 aa).

In terms of domain architecture, PH spans 2-109 (AFVKSGWLLR…WKFTLQDSRT (108 aa)). Residue K20 participates in a 1,2-diacyl-sn-glycero-3-phospho-L-serine binding.

It is found in the recycling endosome membrane. Involved in retrograde transport of recycling endosomes. This is Pleckstrin homology domain-containing family B member 2 (PLEKHB2) from Pongo abelii (Sumatran orangutan).